Reading from the N-terminus, the 86-residue chain is MLQRKPKYNSDYSDARSKKRKRCPFTAAGIREIDYKDIDTLTKFITERGKILPRRITGVSAYHQKKLTAAIKRARHVALLPFVAEV.

It belongs to the bacterial ribosomal protein bS18 family. As to quaternary structure, part of the 30S ribosomal subunit. Forms a tight heterodimer with protein bS6.

Binds as a heterodimer with protein bS6 to the central domain of the 16S rRNA, where it helps stabilize the platform of the 30S subunit. The sequence is that of Small ribosomal subunit protein bS18 from Protochlamydia amoebophila (strain UWE25).